The sequence spans 447 residues: Na(+)-translocating NADH-quinone reductase subunit A (447 aa).

This sequence belongs to the NqrA family. In terms of assembly, composed of six subunits; NqrA, NqrB, NqrC, NqrD, NqrE and NqrF.

The catalysed reaction is a ubiquinone + n Na(+)(in) + NADH + H(+) = a ubiquinol + n Na(+)(out) + NAD(+). NQR complex catalyzes the reduction of ubiquinone-1 to ubiquinol by two successive reactions, coupled with the transport of Na(+) ions from the cytoplasm to the periplasm. NqrA to NqrE are probably involved in the second step, the conversion of ubisemiquinone to ubiquinol. In Klebsiella pneumoniae (strain 342), this protein is Na(+)-translocating NADH-quinone reductase subunit A.